Consider the following 400-residue polypeptide: Phosphoglycerate kinase (400 aa).

Substrate is bound by residues 21–23, Arg37, 60–63, Arg121, and Arg154; these read DFN and HLGR. ATP is bound by residues Lys204, Glu326, and 355 to 358; that span reads GGDS.

It belongs to the phosphoglycerate kinase family. Monomer.

It localises to the cytoplasm. The enzyme catalyses (2R)-3-phosphoglycerate + ATP = (2R)-3-phospho-glyceroyl phosphate + ADP. Its pathway is carbohydrate degradation; glycolysis; pyruvate from D-glyceraldehyde 3-phosphate: step 2/5. The chain is Phosphoglycerate kinase from Chloroflexus aggregans (strain MD-66 / DSM 9485).